Consider the following 426-residue polypeptide: D-tagatose-1,6-bisphosphate aldolase subunit KbaZ (426 aa).

This sequence belongs to the GatZ/KbaZ family. KbaZ subfamily. Forms a complex with KbaY.

It functions in the pathway carbohydrate metabolism; D-tagatose 6-phosphate degradation; D-glyceraldehyde 3-phosphate and glycerone phosphate from D-tagatose 6-phosphate: step 2/2. Component of the tagatose-1,6-bisphosphate aldolase KbaYZ that is required for full activity and stability of the Y subunit. Could have a chaperone-like function for the proper and stable folding of KbaY. When expressed alone, KbaZ does not show any aldolase activity. The chain is D-tagatose-1,6-bisphosphate aldolase subunit KbaZ from Escherichia coli O127:H6 (strain E2348/69 / EPEC).